Consider the following 199-residue polypeptide: Protein GrpE (199 aa).

Residues 1–17 show a composition bias toward polar residues; that stretch reads MSDSDNNTKSQQNNPTQ. A disordered region spans residues 1-36; sequence MSDSDNNTKSQQNNPTQTDEKSGEEIQSNQKPQRKF.

It belongs to the GrpE family. As to quaternary structure, homodimer.

It localises to the cytoplasm. Participates actively in the response to hyperosmotic and heat shock by preventing the aggregation of stress-denatured proteins, in association with DnaK and GrpE. It is the nucleotide exchange factor for DnaK and may function as a thermosensor. Unfolded proteins bind initially to DnaJ; upon interaction with the DnaJ-bound protein, DnaK hydrolyzes its bound ATP, resulting in the formation of a stable complex. GrpE releases ADP from DnaK; ATP binding to DnaK triggers the release of the substrate protein, thus completing the reaction cycle. Several rounds of ATP-dependent interactions between DnaJ, DnaK and GrpE are required for fully efficient folding. The chain is Protein GrpE from Ehrlichia canis (strain Jake).